A 377-amino-acid polypeptide reads, in one-letter code: Histidine protein methyltransferase 1 (377 aa).

It belongs to the methyltransferase superfamily. METTL18 family.

It localises to the cytoplasm. Its subcellular location is the nucleus. The catalysed reaction is L-histidyl-[protein] + S-adenosyl-L-methionine = N(tele)-methyl-L-histidyl-[protein] + S-adenosyl-L-homocysteine + H(+). Functionally, protein-histidine N-methyltransferase that mediates methylation of RPL3 at 'His-243'. Methylates ribosome-associated RPL3, but not free RPL3, thereby regulating 60S subunit assembly. In addition to RPL3, mediates His methylation of other proteins. The chain is Histidine protein methyltransferase 1 from Saccharomyces cerevisiae (strain ATCC 204508 / S288c) (Baker's yeast).